The chain runs to 1674 residues: Maestro heat-like repeat-containing protein family member 2A (1674 aa).

Positions 1 to 26 (MTEAITEAAVASSEEVSEERDDLGPL) are disordered. HEAT repeat units follow at residues 73–96 (ATTE…ISTQ), 97–133 (RKVN…EMRE), 195–234 (MPYM…TVQF), 254–292 (LKVF…LLLP), 382–419 (SYPK…ADEP), 424–461 (RAIY…CGYQ), 573–612 (PAPQ…SIAP), 615–641 (ADMW…DQKA), 642–679 (WEDK…SFDS), 739–776 (KTVL…ETVK), 993–1030 (GQFG…LHAS), 1221–1263 (DPLM…SHRP), 1381–1420 (EKLL…GAPK), and 1627–1674 (LDFP…QGMS).

This chain is Maestro heat-like repeat-containing protein family member 2A (MROH2A), found in Homo sapiens (Human).